The chain runs to 198 residues: Na(+)-translocating NADH-quinone reductase subunit E (198 aa).

6 helical membrane passes run 11–31 (AVFV…FLAV), 35–55 (VSTA…AVPI), 77–97 (FLNF…LEMI), 110–130 (GIFL…SFMV), 140–160 (IVYG…MAGI), and 176–196 (LGIT…FSGV).

This sequence belongs to the NqrDE/RnfAE family. In terms of assembly, composed of six subunits; NqrA, NqrB, NqrC, NqrD, NqrE and NqrF.

It is found in the cell inner membrane. The enzyme catalyses a ubiquinone + n Na(+)(in) + NADH + H(+) = a ubiquinol + n Na(+)(out) + NAD(+). Its function is as follows. NQR complex catalyzes the reduction of ubiquinone-1 to ubiquinol by two successive reactions, coupled with the transport of Na(+) ions from the cytoplasm to the periplasm. NqrA to NqrE are probably involved in the second step, the conversion of ubisemiquinone to ubiquinol. This chain is Na(+)-translocating NADH-quinone reductase subunit E, found in Klebsiella pneumoniae subsp. pneumoniae (strain ATCC 700721 / MGH 78578).